Here is a 504-residue protein sequence, read N- to C-terminus: Cholesterol 7-alpha-monooxygenase (504 aa).

Residue C444 coordinates heme.

Belongs to the cytochrome P450 family. Heme is required as a cofactor.

Its subcellular location is the endoplasmic reticulum membrane. It is found in the microsome membrane. The enzyme catalyses cholesterol + reduced [NADPH--hemoprotein reductase] + O2 = 7alpha-hydroxycholesterol + oxidized [NADPH--hemoprotein reductase] + H2O + H(+). The protein operates within lipid metabolism; bile acid biosynthesis. Its function is as follows. Catalyzes a rate-limiting step in cholesterol catabolism and bile acid biosynthesis by introducing a hydrophilic moiety at position 7 of cholesterol. Important for cholesterol homeostasis. In Cricetulus griseus (Chinese hamster), this protein is Cholesterol 7-alpha-monooxygenase (CYP7A1).